The chain runs to 274 residues: uncharacterized protein (274 aa).

This is an uncharacterized protein from Mycobacterium tuberculosis (strain ATCC 25618 / H37Rv).